The chain runs to 553 residues: Transcriptional regulator HilA (553 aa).

Residues 11–107 (NKKFVFDDFI…LYGQGYRFNR (97 aa)) constitute a DNA-binding region (ompR/PhoB-type). At Asp-62 the chain carries 4-aspartylphosphate. A TPR repeat occupies 372 to 405 (ADIKYYYGWNLFMAGQLEEALQTINECLKLDPTR).

Functionally, the main transcriptional regulator of the Salmonella pathogenicity island 1 (SPI1) gene expression. Activates the expression of invasion genes by a direct action at their promoters and also indirectly by increasing the level of InvF. Also binds upstream of prgH and directly activates the expression of prgHIJK operon. This is Transcriptional regulator HilA (hilA) from Salmonella typhimurium (strain LT2 / SGSC1412 / ATCC 700720).